The following is a 217-amino-acid chain: Adenylate kinase (217 aa).

Gly10–Thr15 lines the ATP pocket. Positions Ser30–Val59 are NMP. AMP is bound by residues Thr31, Arg36, Leu57 to Val59, Gly85 to Arg88, and Gln92. An LID region spans residues Gly126 to Asp163. Arg127 lines the ATP pocket. The Zn(2+) site is built by Cys130 and Cys133. Val136 to Tyr137 serves as a coordination point for ATP. Cys150 and Asp153 together coordinate Zn(2+). AMP is bound by residues Arg160 and Arg171. Gln199 is a binding site for ATP.

The protein belongs to the adenylate kinase family. Monomer.

It localises to the cytoplasm. The catalysed reaction is AMP + ATP = 2 ADP. Its pathway is purine metabolism; AMP biosynthesis via salvage pathway; AMP from ADP: step 1/1. Catalyzes the reversible transfer of the terminal phosphate group between ATP and AMP. Plays an important role in cellular energy homeostasis and in adenine nucleotide metabolism. The chain is Adenylate kinase from Aster yellows witches'-broom phytoplasma (strain AYWB).